The chain runs to 247 residues: UPF0246 protein LAF_1150 (247 aa).

It belongs to the UPF0246 family.

This is UPF0246 protein LAF_1150 from Limosilactobacillus fermentum (strain NBRC 3956 / LMG 18251) (Lactobacillus fermentum).